Consider the following 443-residue polypeptide: Diels-Alderase poxQ (443 aa).

Residues 1–23 form the signal peptide; sequence MARIPLEFLSITLPVLLLAYCLA. N-linked (GlcNAc...) asparagine glycans are attached at residues Asn78, Asn97, and Asn145.

This sequence belongs to the Diels-Alderase family.

It functions in the pathway secondary metabolite biosynthesis. Its function is as follows. Diels-Alderase; part of the gene cluster that mediates the biosynthesis of oxaleimides, cytotoxic compounds containing an unusual disubstituted succinimide moiety. The first step of the pathway is provided by the HR-PKS poxF that serves in a new mode of collaborative biosynthesis with the PKS-NRPS poxE, by providing the olefin containing amino acid substrate via the synthesis of an ACP-bound dec-4-enoate. The cytochrome P450 monooxygenase poxM-catalyzed oxidation at the alpha-position creates the enzyme-bound 2-hydroxydec-4-enoyl-ACP thioester, which may be prone to spontaneous hydrolysis to yield 2-hydroxydec-4-enoic acid due to increased electrophilicity of the carbonyl. 2-hydroxydec-4-enoic acid can then be further oxidized by poxM to yield the alpha-ketoacid 2-oxodec-4-enoicacid, which is reductively aminated by the aminotransferase poxL to yield (S,E)-2-aminodec-4-enoic acid. The Hybrid PKS-NRPS synthetase poxE then performs condensation between the octaketide product of its PKS modules and the amino group of (S,E)-2-aminodec-4-enoic acid which is activated and incorporated by the adenylation domain. The resulting aminoacyl product can be cyclized by the Diels-Alderase PoxQ and reductively released by the reductive (R) domain of poxE to yield an aldehyde intermediate. The released aldehyde is then substrate for a Knoevenagel condensation by the hydrolyase poxO followed by an oxidation at the 5-position of the pyrrolidone ring. The presence of the olefin from the amino acid building block allows for migration of the substituted allyl group to occur. This allylic transposition reaction takes place in a conjugate addition, semipinacol-like fashion to yield a succinimide intermediate. Iterative two-electron oxidations of the C7 methyl of the succinimide intermediate to the carboxylic acid can be catalyzed by one of two remaining cytochrome P450 monooxygenasess poxC or poxD to yield oxaleimide A. Subsequent oxidation yields the maleimide scaffold oxaleimide I. Both oxaleimide A and oxaleimide I can undergo oxidative modifications in the decalin ring to yield the series of products oxaleimides B to H. The polypeptide is Diels-Alderase poxQ (Penicillium oxalicum).